A 457-amino-acid chain; its full sequence is Phosphomethylpyrimidine synthase (457 aa).

Substrate contacts are provided by residues N80, M109, Y139, H175, 195–197 (SRG), 236–239 (DSLR), and E275. H279 lines the Zn(2+) pocket. Position 302 (Y302) interacts with substrate. H343 lines the Zn(2+) pocket. Residues C423, C426, and C431 each coordinate [4Fe-4S] cluster.

It belongs to the ThiC family. Requires [4Fe-4S] cluster as cofactor.

The enzyme catalyses 5-amino-1-(5-phospho-beta-D-ribosyl)imidazole + S-adenosyl-L-methionine = 4-amino-2-methyl-5-(phosphooxymethyl)pyrimidine + CO + 5'-deoxyadenosine + formate + L-methionine + 3 H(+). Its pathway is cofactor biosynthesis; thiamine diphosphate biosynthesis. In terms of biological role, catalyzes the synthesis of the hydroxymethylpyrimidine phosphate (HMP-P) moiety of thiamine from aminoimidazole ribotide (AIR) in a radical S-adenosyl-L-methionine (SAM)-dependent reaction. This Trichormus variabilis (strain ATCC 29413 / PCC 7937) (Anabaena variabilis) protein is Phosphomethylpyrimidine synthase.